The primary structure comprises 494 residues: Cardiolipin synthase (494 aa).

2 helical membrane passes run 14-34 (IILN…AFTI) and 45-65 (IWAW…LYLL). PLD phosphodiesterase domains follow at residues 229–256 (MNNR…GDEY) and 407–434 (DNGF…DHRS). Catalysis depends on residues H234, K236, D241, H412, K414, and D419.

This sequence belongs to the phospholipase D family. Cardiolipin synthase subfamily.

The protein resides in the cell membrane. The enzyme catalyses 2 a 1,2-diacyl-sn-glycero-3-phospho-(1'-sn-glycerol) = a cardiolipin + glycerol. Functionally, catalyzes the reversible phosphatidyl group transfer from one phosphatidylglycerol molecule to another to form cardiolipin (CL) (diphosphatidylglycerol) and glycerol. This chain is Cardiolipin synthase (cls), found in Staphylococcus aureus (strain Mu50 / ATCC 700699).